The primary structure comprises 1445 residues: Tensin-3 (1445 aa).

One can recognise a Phosphatase tensin-type domain in the interval 1–170; that stretch reads MEEGHGLDLT…QFLSGLLSGS (170 aa). The 127-residue stretch at 175-301 folds into the C2 tensin-type domain; it reads ASPLFLHFVI…GKVELVFSAT (127 aa). Residue T323 is modified to Phosphothreonine. Residues S332 and S361 each carry the phosphoserine modification. The interval 358-421 is disordered; it reads RKKSSSDPGI…GTRRGLSAQE (64 aa). Residues 386–400 are compositionally biased toward polar residues; that stretch reads TLSVSSDSGHSTASA. A phosphoserine mark is found at S440 and S516. The disordered stretch occupies residues 538-568; it reads VPDLGLGMDGPYERERTFGSREPKQPQPLLR. A compositionally biased stretch (basic and acidic residues) spans 548 to 561; that stretch reads PYERERTFGSREPK. S571 carries the phosphoserine modification. Disordered regions lie at residues 618–695 and 717–769; these read DNPG…TLDI and PTHM…QPLG. Phosphothreonine is present on T632. 4 positions are modified to phosphoserine: S649, S660, S687, and S690. Polar residues predominate over residues 723–733; the sequence is LGSQANGSVSP. Residues S735 and S776 each carry the phosphoserine modification. A Phosphotyrosine modification is found at Y780. S811, S866, and S901 each carry phosphoserine. Disordered regions lie at residues 859-981 and 1076-1127; these read ALRH…TRKD and GHSS…PHSG. Residues 864–873 show a composition bias toward pro residues; sequence PFSPPEPPLS. A compositionally biased stretch (polar residues) spans 914-935; the sequence is ASSTPSFQQAFASSCTISSNGP. Residues 1099–1109 show a composition bias toward basic and acidic residues; sequence PEKKRASEGDR. Residues 1110-1127 show a composition bias toward low complexity; that stretch reads SLGSVSPSSSGFSSPHSG. 2 positions are modified to phosphoserine: S1149 and S1154. Positions 1172–1282 constitute an SH2 domain; sequence WYKADISREQ…ALPCKLLIPE (111 aa). A phosphoserine mark is found at S1293 and S1441. In terms of domain architecture, PTB spans 1310–1444; sequence ACNVWYLNSV…SKVMIGSPKK (135 aa).

It belongs to the PTEN phosphatase protein family. As to quaternary structure, interacts with EGFR; EGF promotes the interaction with EGFR. Interacts with PTK2/FAK1 and BCAR1. Tyrosine phosphorylation is critical for these interactions. Interacts with Rho GTPase-activating protein DLC1 and with the regulatory p85 subunit of the PI3K kinase complex; in resting cells, interacts (via C2 tensin-type domain) with DLC1 but, following growth factor stimulation, TNS3 is phosphorylated which leads to weakened interaction with DLC1 and enhanced interaction (via C2 tensin-type domain) with p85 while DLC1 interaction with PTEN increases. Interacts (when phosphorylated on the SH2 domain) with integrins ITGB1, ITGB3 and ITGB5 and with scaffolding protein PEAK1 (phosphorylated on 'Tyr-635'); mediates the association of PEAK1 with ITGB1, ITGB3 and ITGB5. Interacts (via N-terminus) with DOCK5 (via N-terminus); the interaction increases DOCK5 guanine nucleotide exchange activity towards Rac. Interacts with receptor tyrosine kinase MET. In terms of processing, phosphorylated on Ser/Thr and Tyr residues. Phosphorylated on Thr-323 in the C2-type tensin domain following EGF stimulation which changes its binding preference from DLC1 to the p85 regulatory subunit of the PI3K kinase complex. EGF induces tyrosine phosphorylation in a time- and dose-dependent manner. Phosphorylation of the SH2 domain enhances interaction with PEAK1. In terms of tissue distribution, expressed in umbilical vein endothelial cells, epithelial cells, and fibroblasts cells (at protein level). Highly expressed in thyroid, kidney and placenta. Low expression in heart, skeletal muscle, spleen, liver, and lung. Expressed at higher levels in tonsil-derived mesenchymal stem cells (MSCs) than in adipose tissue-derived MSCs or bone marrow-derived MSCs. Expressed in tumor endothelial cells. Expression seems to be down-regulated in thyroid tumor tissues and in anaplastic carcinomas.

It is found in the cell junction. The protein localises to the focal adhesion. The protein resides in the cell projection. Its subcellular location is the podosome. Functionally, may act as a protein phosphatase and/or a lipid phosphatase. Involved in the dissociation of the integrin-tensin-actin complex. EGF activates TNS4 and down-regulates TNS3 which results in capping the tail of ITGB1. Increases DOCK5 guanine nucleotide exchange activity towards Rac and plays a role in osteoclast podosome organization. Enhances RHOA activation in the presence of DLC1. Required for growth factor-induced epithelial cell migration; growth factor stimulation induces TNS3 phosphorylation which changes its binding preference from DLC1 to the p85 regulatory subunit of the PI3K kinase complex, displacing PI3K inhibitor PTEN and resulting in translocation of the TNS3-p85 complex to the leading edge of migrating cells to promote RAC1 activation. Meanwhile, PTEN switches binding preference from p85 to DLC1 and the PTEN-DLC1 complex translocates to the posterior of migrating cells to activate RHOA. Acts as an adapter protein by bridging the association of scaffolding protein PEAK1 with integrins ITGB1, ITGB3 and ITGB5 which contributes to the promotion of cell migration. Controls tonsil-derived mesenchymal stem cell proliferation and differentiation by regulating the activity of integrin ITGB1. The chain is Tensin-3 (TNS3) from Homo sapiens (Human).